Here is a 418-residue protein sequence, read N- to C-terminus: AP-3 complex subunit mu-1 (418 aa).

The region spanning asparagine 176 to arginine 417 is the MHD domain.

It belongs to the adaptor complexes medium subunit family. Adaptor protein complex 3 (AP-3) is a heterotetramer composed of two large adaptins (delta-type subunit AP3D1 and beta-type subunit AP3B1 or AP3B2), a medium adaptin (mu-type subunit AP3M1 or AP3M2) and a small adaptin (sigma-type subunit APS1 or AP3S2). Interacts with AGAP1. AP-3 associates with the BLOC-1 complex.

It is found in the golgi apparatus. It localises to the cytoplasmic vesicle membrane. Its function is as follows. Part of the AP-3 complex, an adaptor-related complex which is not clathrin-associated. The complex is associated with the Golgi region as well as more peripheral structures. It facilitates the budding of vesicles from the Golgi membrane and may be directly involved in trafficking to lysosomes. In concert with the BLOC-1 complex, AP-3 is required to target cargos into vesicles assembled at cell bodies for delivery into neurites and nerve terminals. This chain is AP-3 complex subunit mu-1 (AP3M1), found in Bos taurus (Bovine).